Reading from the N-terminus, the 78-residue chain is Large ribosomal subunit protein bL28 (78 aa).

Belongs to the bacterial ribosomal protein bL28 family.

The sequence is that of Large ribosomal subunit protein bL28 from Haemophilus influenzae (strain 86-028NP).